The primary structure comprises 385 residues: Serine/threonine-protein kinase H2 (385 aa).

The region spanning 63–320 (YDIKALIGTG…AGQALDHPWV (258 aa)) is the Protein kinase domain. Residues 69–77 (IGTGSFSRV) and Lys-92 contribute to the ATP site. The interval 342 to 367 (QRASPHSQSPGSAQSSKSHYSHKSRH) is disordered. The segment covering 344–359 (ASPHSQSPGSAQSSKS) has biased composition (low complexity).

The protein belongs to the protein kinase superfamily. CAMK Ser/Thr protein kinase family.

It catalyses the reaction L-seryl-[protein] + ATP = O-phospho-L-seryl-[protein] + ADP + H(+). It carries out the reaction L-threonyl-[protein] + ATP = O-phospho-L-threonyl-[protein] + ADP + H(+). The sequence is that of Serine/threonine-protein kinase H2 (PSKH2) from Homo sapiens (Human).